The sequence spans 477 residues: Salivary plasminogen activator alpha 1 (477 aa).

A signal peptide spans 1-36; the sequence is MVNTMKTKLLCVLLLCGAVFSLPRQETYRQLARGSR. Positions 40-82 constitute a Fibronectin type-I domain; that stretch reads VACKDEITQMTYRRQESWLRPEVRSKRVEHCQCDRGQARCHTV. 14 cysteine pairs are disulfide-bonded: Cys42–Cys72, Cys70–Cys79, Cys87–Cys98, Cys92–Cys109, Cys111–Cys120, Cys128–Cys209, Cys149–Cys191, Cys180–Cys204, Cys214–Cys345, Cys257–Cys273, Cys265–Cys334, Cys359–Cys434, Cys391–Cys407, and Cys424–Cys452. An EGF-like domain is found at 83 to 121; sequence PVNSCSEPRCFNGGTCWQAVYFSDFVCQCPAGYTGKRCE. A Kringle domain is found at 128 to 209; it reads CYEGQGVTYR…TSESCSVPVC (82 aa). A glycan (N-linked (GlcNAc...) asparagine) is linked at Asn153. Residues 226 to 476 enclose the Peptidase S1 domain; the sequence is STGGLFTDIT…YLGWIRDNMH (251 aa). Residues His272 and Asp321 each act as charge relay system in the active site. Asn398 carries N-linked (GlcNAc...) asparagine glycosylation. The Charge relay system role is filled by Ser428.

The protein belongs to the peptidase S1 family. In terms of assembly, monomer.

The protein localises to the secreted. The catalysed reaction is Specific cleavage of Arg-|-Val bond in plasminogen to form plasmin.. Activity toward plasminogen is stimulated in the presence of fibrin I. Probably essential to support the feeding habits of this exclusively haematophagous animal. Potent thrombolytic agent. This chain is Salivary plasminogen activator alpha 1, found in Desmodus rotundus (Vampire bat).